The primary structure comprises 322 residues: MKIIFLGTGAAIPTKHRNHSSVGIKYDGEVFLFDCGEGTQRQMIYTDISPMKINNIFISHLHGDHILGLAGLLQSIGFNGRTEPINIYGPPEIKNTIENILKIGYHSINFKITVHEINSKKPMKIIDSEKYMAYAYPVNHSIPCYAYILKEKKKPQLNLKKAMELGVEVGPDLKSLKDGNEVKLKNGKIIYPNDVLLPPKDSMCVAYSGDTMPIEDFGEFLNSIGCTVLIHEATFGSSKKNNAVETMHSTIEDAVNIGKIACVDTVILTHISARYDDNIEIYYNEIENIIKNNNEYNDNNFKIIVAEDLMEYDLKNKETIKK.

7 residues coordinate Zn(2+): histidine 60, histidine 62, aspartate 64, histidine 65, histidine 140, aspartate 210, and histidine 270. Residue aspartate 64 is the Proton acceptor of the active site.

It belongs to the RNase Z family. As to quaternary structure, homodimer. Zn(2+) serves as cofactor.

It carries out the reaction Endonucleolytic cleavage of RNA, removing extra 3' nucleotides from tRNA precursor, generating 3' termini of tRNAs. A 3'-hydroxy group is left at the tRNA terminus and a 5'-phosphoryl group is left at the trailer molecule.. In terms of biological role, zinc phosphodiesterase, which displays some tRNA 3'-processing endonuclease activity. Probably involved in tRNA maturation, by removing a 3'-trailer from precursor tRNA. This is Ribonuclease Z from Methanococcus aeolicus (strain ATCC BAA-1280 / DSM 17508 / OCM 812 / Nankai-3).